Here is a 753-residue protein sequence, read N- to C-terminus: Probable tubulin--tyrosine ligase PBY1 (753 aa).

Residues 343–734 (MEYIYKPLTH…PIFNENRNKT (392 aa)) form the TTL domain.

It belongs to the tubulin--tyrosine ligase family. Requires Mg(2+) as cofactor. K(+) is required as a cofactor.

The protein resides in the cytoplasm. It is found in the P-body. The catalysed reaction is C-terminal L-alpha-aminoacyl-L-glutamyl-L-glutamyl-[tubulin] + L-tyrosine + ATP = C-terminal L-alpha-aminoacyl-L-glutamyl-L-glutamyl-L-tyrosyl-[tubulin] + ADP + phosphate + H(+). Probable P-body-associated tubulin--tyrosine ligase. The sequence is that of Probable tubulin--tyrosine ligase PBY1 (PBY1) from Saccharomyces cerevisiae (strain ATCC 204508 / S288c) (Baker's yeast).